We begin with the raw amino-acid sequence, 185 residues long: DNA-directed RNA polymerase 21 kDa subunit (185 aa).

The protein belongs to the poxviridae DNA-directed RNA polymerase 22 kDa subunit family. As to quaternary structure, the DNA-dependent RNA polymerase used for intermediate and late genes expression consists of eight subunits Rpo30/OPG66, Rpo7/OPG90, Rpo22/OPG103, Rpo147/OPG105, Rpo18/OPG119, Rpo19/OPG131, Rpo132/OPG151 and Rpo35/OPG156. The same holoenzyme, with the addition of the transcription-specificity factor OPG109, is used for early gene expression.

It is found in the virion. It carries out the reaction RNA(n) + a ribonucleoside 5'-triphosphate = RNA(n+1) + diphosphate. Its function is as follows. Part of the DNA-dependent RNA polymerase which catalyzes the transcription of viral DNA into RNA using the four ribonucleoside triphosphates as substrates. Responsible for the transcription of early, intermediate and late genes. DNA-dependent RNA polymerase associates with the early transcription factor (ETF), itself composed of OPG118 and OPG133, thereby allowing the early genes transcription. Late transcription, and probably also intermediate transcription, require newly synthesized RNA polymerase. The sequence is that of DNA-directed RNA polymerase 21 kDa subunit (OPG103) from Oryctolagus cuniculus (Rabbit).